The primary structure comprises 86 residues: MDPYSVIIKPQLSEKTMNQIYDENKITFVVRRSANKRVIKEAFQDLYDTKVVGVNTHITPRGNKVATIELEEADAAEDIAVRLGVF.

It belongs to the universal ribosomal protein uL23 family. Part of the 50S ribosomal subunit. Contacts protein L29.

Functionally, binds to 23S rRNA. One of the proteins that surrounds the polypeptide exit tunnel on the outside of the ribosome. The sequence is that of Large ribosomal subunit protein uL23 from Methanosphaera stadtmanae (strain ATCC 43021 / DSM 3091 / JCM 11832 / MCB-3).